The chain runs to 108 residues: Small ribosomal subunit protein uS10 (108 aa).

It belongs to the universal ribosomal protein uS10 family. As to quaternary structure, part of the 30S ribosomal subunit.

In terms of biological role, involved in the binding of tRNA to the ribosomes. This is Small ribosomal subunit protein uS10 from Ehrlichia chaffeensis (strain ATCC CRL-10679 / Arkansas).